Reading from the N-terminus, the 618-residue chain is 1-deoxy-D-xylulose-5-phosphate synthase (618 aa).

Residues His75 and 116–118 (GHS) each bind thiamine diphosphate. Asp147 is a Mg(2+) binding site. Thiamine diphosphate-binding positions include 148-149 (GA), Asn176, Tyr283, and Glu364. Position 176 (Asn176) interacts with Mg(2+).

It belongs to the transketolase family. DXPS subfamily. Homodimer. Requires Mg(2+) as cofactor. Thiamine diphosphate is required as a cofactor.

It catalyses the reaction D-glyceraldehyde 3-phosphate + pyruvate + H(+) = 1-deoxy-D-xylulose 5-phosphate + CO2. It participates in metabolic intermediate biosynthesis; 1-deoxy-D-xylulose 5-phosphate biosynthesis; 1-deoxy-D-xylulose 5-phosphate from D-glyceraldehyde 3-phosphate and pyruvate: step 1/1. In terms of biological role, catalyzes the acyloin condensation reaction between C atoms 2 and 3 of pyruvate and glyceraldehyde 3-phosphate to yield 1-deoxy-D-xylulose-5-phosphate (DXP). In Thiobacillus denitrificans (strain ATCC 25259 / T1), this protein is 1-deoxy-D-xylulose-5-phosphate synthase.